The chain runs to 453 residues: 13-hydroxylupanine O-tigloyltransferase (453 aa).

Residues histidine 166 and aspartate 385 each act as proton acceptor in the active site.

Belongs to the plant acyltransferase family. Monomer. In terms of tissue distribution, expressed in roots and hypocotyls. Detected in seeds, leaves and cotyledons, but not in young developing leaves.

The catalysed reaction is 13-hydroxylupanine + (2E)-2-methylbut-2-enoyl-CoA = 13-(2-methylcrotonoyloxy)lupanine + CoA. Its activity is regulated as follows. Inhibited by N-ethylmaleimide, p-chloromercuribenzoic acid and diethylpyrocarbonate (DEPC). In terms of biological role, acyl-CoA-dependent acyltransferase involved in the synthesis of lupanine alkaloids. Can use both (-)-13alpha-hydroxymultiflorine and (+)-13alpha-hydroxylupanine as substrates. Lower activity with (-)-3beta, 13alpha-dihydroxylupanine, but no activity with (+)-epilupinine and (-)-lupinine as substrates. Tigloyl-CoA, benzoyl-CoA and, more slowly, acetyl-CoA, propionyl-CoA and 2-butenoyl-CoA can act as acyl donors. In Lupinus albus (White lupine), this protein is 13-hydroxylupanine O-tigloyltransferase (HMT/HLT).